The chain runs to 902 residues: Translation initiation factor IF-2 (902 aa).

2 stretches are compositionally biased toward basic and acidic residues: residues 1-12 and 43-60; these read MVDTKTPGDKKL and VVEK…EPHA. The disordered stretch occupies residues 1–276; sequence MVDTKTPGDK…KPGPQKERGR (276 aa). A compositionally biased stretch (pro residues) spans 69 to 84; that stretch reads PAAPAPSRPAPPPAPP. Positions 111–174 are enriched in basic and acidic residues; that stretch reads AKLREVEERR…ETEAKKRFGE (64 aa). 2 stretches are compositionally biased toward low complexity: residues 181–190 and 198–237; these read AARPATAAPA and APAA…AVAA. A tr-type G domain is found at 398 to 567; sequence TRSPVVTVMG…MIALQADILD (170 aa). Residues 407-414 are G1; that stretch reads GHVDHGKT. Position 407-414 (407-414) interacts with GTP; that stretch reads GHVDHGKT. The segment at 432–436 is G2; sequence GITQH. The G3 stretch occupies residues 455-458; that stretch reads DTPG. GTP contacts are provided by residues 455-459 and 509-512; these read DTPGH and NKID. The tract at residues 509–512 is G4; that stretch reads NKID. The tract at residues 545-547 is G5; that stretch reads SAK.

This sequence belongs to the TRAFAC class translation factor GTPase superfamily. Classic translation factor GTPase family. IF-2 subfamily.

The protein resides in the cytoplasm. In terms of biological role, one of the essential components for the initiation of protein synthesis. Protects formylmethionyl-tRNA from spontaneous hydrolysis and promotes its binding to the 30S ribosomal subunits. Also involved in the hydrolysis of GTP during the formation of the 70S ribosomal complex. In Bradyrhizobium diazoefficiens (strain JCM 10833 / BCRC 13528 / IAM 13628 / NBRC 14792 / USDA 110), this protein is Translation initiation factor IF-2.